The primary structure comprises 239 residues: MAINVIINGINGKMGRVVKENITAQSDLELVSGTGRQDDLAKTIQTTHADVVIDFTTPQSVFHNAEIIIQSGARPVIGTTGLTLEQIALLDKQCRNKKLGAIVAPNFSVGAVLMMKYAKEAAHYFPDVEIIEMHHSQKIDAPSGTAIKTAQMIGEMRSSKKDEPFKDRARGEIKNGIPIHSIRLPGLFSHQSVIFGSNGETLTIRHDGMDRNCTMPGIFMACRKVMELDYLVYGLENLL.

Residues G9–M14, G78–T80, and A104–F107 each bind NAD(+). The Proton donor/acceptor role is filled by H134. H135 serves as a coordination point for (S)-2,3,4,5-tetrahydrodipicolinate. K138 acts as the Proton donor in catalysis. Position 144–145 (G144–T145) interacts with (S)-2,3,4,5-tetrahydrodipicolinate.

This sequence belongs to the DapB family.

It localises to the cytoplasm. The catalysed reaction is (S)-2,3,4,5-tetrahydrodipicolinate + NAD(+) + H2O = (2S,4S)-4-hydroxy-2,3,4,5-tetrahydrodipicolinate + NADH + H(+). The enzyme catalyses (S)-2,3,4,5-tetrahydrodipicolinate + NADP(+) + H2O = (2S,4S)-4-hydroxy-2,3,4,5-tetrahydrodipicolinate + NADPH + H(+). It participates in amino-acid biosynthesis; L-lysine biosynthesis via DAP pathway; (S)-tetrahydrodipicolinate from L-aspartate: step 4/4. Its function is as follows. Catalyzes the conversion of 4-hydroxy-tetrahydrodipicolinate (HTPA) to tetrahydrodipicolinate. The sequence is that of 4-hydroxy-tetrahydrodipicolinate reductase from Coxiella burnetii (strain Dugway 5J108-111).